Here is an 833-residue protein sequence, read N- to C-terminus: Leucine--tRNA ligase (833 aa).

The 'HIGH' region motif lies at 41 to 52 (PYPSGAGLHVGH). The 'KMSKS' region signature appears at 610–614 (KMSKS). Residue K613 coordinates ATP.

The protein belongs to the class-I aminoacyl-tRNA synthetase family.

It is found in the cytoplasm. The enzyme catalyses tRNA(Leu) + L-leucine + ATP = L-leucyl-tRNA(Leu) + AMP + diphosphate. The protein is Leucine--tRNA ligase of Streptococcus pyogenes serotype M3 (strain ATCC BAA-595 / MGAS315).